A 564-amino-acid chain; its full sequence is Phomacin cluster regulator phmR (564 aa).

Positions 33-64 (CDRCRGHKLRCIRDQMTVDSPCQRCRKAREKC) form a DNA-binding region, zn(2)-C6 fungal-type. 3 disordered regions span residues 68–93 (SSTRPVPARLNRSSQGHKLPGATSSA), 152–197 (DFAD…NPFL), and 252–278 (PIHPPTMASSHRTHSTASNDSSKDSTT). Composition is skewed to polar residues over residues 182 to 192 (ITPTSQGTTAV) and 258 to 278 (MASSHRTHSTASNDSSKDSTT).

It localises to the nucleus. In terms of biological role, transcription factor that specifically regulates the expression of the gene cluster that mediates the biosynthesis of the mycotoxins phomacins, leucine-derived cytochalasans with potent actin polymerization-inhibitory activities and monocot-specific antigerminative activities. This chain is Phomacin cluster regulator phmR, found in Phaeosphaeria nodorum (strain SN15 / ATCC MYA-4574 / FGSC 10173) (Glume blotch fungus).